We begin with the raw amino-acid sequence, 90 residues long: Small ribosomal subunit protein bS16 (90 aa).

This sequence belongs to the bacterial ribosomal protein bS16 family.

The sequence is that of Small ribosomal subunit protein bS16 from Moorella thermoacetica (strain ATCC 39073 / JCM 9320).